Consider the following 124-residue polypeptide: Small ribosomal subunit protein uS12 (124 aa).

The segment at 1 to 28 (MPTIQQLIRSERSKAKKKTKSPALKQCP) is disordered. A 3-methylthioaspartic acid modification is found at Asp-89. A disordered region spans residues 101-124 (TLDAQGVKDRKQGRSKYGTKKPKE). The segment covering 113 to 124 (GRSKYGTKKPKE) has biased composition (basic residues).

Belongs to the universal ribosomal protein uS12 family. In terms of assembly, part of the 30S ribosomal subunit. Contacts proteins S8 and S17. May interact with IF1 in the 30S initiation complex.

Its function is as follows. With S4 and S5 plays an important role in translational accuracy. Interacts with and stabilizes bases of the 16S rRNA that are involved in tRNA selection in the A site and with the mRNA backbone. Located at the interface of the 30S and 50S subunits, it traverses the body of the 30S subunit contacting proteins on the other side and probably holding the rRNA structure together. The combined cluster of proteins S8, S12 and S17 appears to hold together the shoulder and platform of the 30S subunit. In Crocosphaera subtropica (strain ATCC 51142 / BH68) (Cyanothece sp. (strain ATCC 51142)), this protein is Small ribosomal subunit protein uS12.